The chain runs to 436 residues: 2-aminohexano-6-lactam racemase (436 aa).

Residues Gly110 to Ser111, Tyr137, and Asp238 to Lys241 each bind pyridoxal 5'-phosphate. Tyr137 is an active-site residue. Lys267 carries the N6-(pyridoxal phosphate)lysine modification. Position 295 (Thr295) interacts with pyridoxal 5'-phosphate.

The protein belongs to the class-III pyridoxal-phosphate-dependent aminotransferase family. In terms of assembly, monomer. The cofactor is pyridoxal 5'-phosphate.

It carries out the reaction L-2-aminohexano-6-lactam = D-2-aminohexano-6-lactam. Catalyzes the interconversion of L-alpha-amino-epsilon-caprolactam and D-alpha-amino-epsilon-caprolactam. This is 2-aminohexano-6-lactam racemase from Achromobacter obae.